Reading from the N-terminus, the 172-residue chain is Putative Dresden prostate carcinoma protein 2 (172 aa).

The tract at residues Gln-40–Ala-61 is disordered.

Very high expression in prostate and prostate cancer. Faint expression in other tissues.

The sequence is that of Putative Dresden prostate carcinoma protein 2 (HMGN2P46) from Homo sapiens (Human).